Consider the following 256-residue polypeptide: uncharacterized protein (256 aa).

Belongs to the metallo-beta-lactamase superfamily.

This is an uncharacterized protein from Methanocaldococcus jannaschii (strain ATCC 43067 / DSM 2661 / JAL-1 / JCM 10045 / NBRC 100440) (Methanococcus jannaschii).